Consider the following 732-residue polypeptide: Elongation factor 2 (732 aa).

The 242-residue stretch at Glu-19–Ile-260 folds into the tr-type G domain. Residues Ala-28–Thr-35, Asp-94–His-98, and Asn-148–Asp-151 contribute to the GTP site. At His-597 the chain carries Diphthamide.

This sequence belongs to the TRAFAC class translation factor GTPase superfamily. Classic translation factor GTPase family. EF-G/EF-2 subfamily.

It is found in the cytoplasm. Catalyzes the GTP-dependent ribosomal translocation step during translation elongation. During this step, the ribosome changes from the pre-translocational (PRE) to the post-translocational (POST) state as the newly formed A-site-bound peptidyl-tRNA and P-site-bound deacylated tRNA move to the P and E sites, respectively. Catalyzes the coordinated movement of the two tRNA molecules, the mRNA and conformational changes in the ribosome. The polypeptide is Elongation factor 2 (fusA) (Pyrococcus horikoshii (strain ATCC 700860 / DSM 12428 / JCM 9974 / NBRC 100139 / OT-3)).